Consider the following 307-residue polypeptide: Ribosomal RNA small subunit methyltransferase H (307 aa).

S-adenosyl-L-methionine contacts are provided by residues 32–34, Asp52, Phe78, Asp99, and Gln106; that span reads GGH.

This sequence belongs to the methyltransferase superfamily. RsmH family.

It is found in the cytoplasm. It catalyses the reaction cytidine(1402) in 16S rRNA + S-adenosyl-L-methionine = N(4)-methylcytidine(1402) in 16S rRNA + S-adenosyl-L-homocysteine + H(+). Specifically methylates the N4 position of cytidine in position 1402 (C1402) of 16S rRNA. In Acinetobacter baumannii (strain AB307-0294), this protein is Ribosomal RNA small subunit methyltransferase H.